A 505-amino-acid polypeptide reads, in one-letter code: AMP phosphorylase (505 aa).

Residues G170, 196–201, and T205 contribute to the AMP site; that span reads SRAITS. Catalysis depends on D258, which acts as the Proton donor. AMP contacts are provided by S266 and K290.

It belongs to the thymidine/pyrimidine-nucleoside phosphorylase family. Type 2 subfamily.

The catalysed reaction is AMP + phosphate = alpha-D-ribose 1,5-bisphosphate + adenine. The enzyme catalyses CMP + phosphate = cytosine + alpha-D-ribose 1,5-bisphosphate. It catalyses the reaction UMP + phosphate = alpha-D-ribose 1,5-bisphosphate + uracil. In terms of biological role, catalyzes the conversion of AMP and phosphate to adenine and ribose 1,5-bisphosphate (R15P). Exhibits phosphorylase activity toward CMP and UMP in addition to AMP. Functions in an archaeal AMP degradation pathway, together with R15P isomerase and RubisCO. In Methanococcus maripaludis (strain C5 / ATCC BAA-1333), this protein is AMP phosphorylase.